The primary structure comprises 182 residues: Transmembrane and coiled-coil domain-containing protein 2 (182 aa).

The chain crosses the membrane as a helical span at residues 51–71; the sequence is VQIILRISFLILLGIGIYALW. Residues 124–151 adopt a coiled-coil conformation; the sequence is GLQEKILKKLKTVENKMKNLEGIIVAQK.

It is found in the membrane. This Homo sapiens (Human) protein is Transmembrane and coiled-coil domain-containing protein 2 (TMCO2).